A 112-amino-acid chain; its full sequence is uncharacterized protein (112 aa).

This sequence to U.parvum UU089.1.

This is an uncharacterized protein from Synechocystis sp. (strain ATCC 27184 / PCC 6803 / Kazusa).